A 2145-amino-acid polypeptide reads, in one-letter code: U5 small nuclear ribonucleoprotein 200 kDa helicase (2145 aa).

Disordered regions lie at residues 54-82 (GDRA…AQQF) and 202-243 (DSDE…GDGH). Residues 220-231 (SEEESEEEEGVD) show a composition bias toward acidic residues. The 184-residue stretch at 484–667 (DSALRSKEHL…FLRVKPEHLH (184 aa)) folds into the Helicase ATP-binding 1 domain. 497–504 (APTGAGKT) lines the ATP pocket. The DEAH box motif lies at 609-612 (DEIH). A Helicase C-terminal domain is found at 677–894 (PLEQQYIGVT…QMVSRLTDML (218 aa)). The SEC63 1 domain maps to 975–1278 (TELGRIASHF…IGAETVLPIS (304 aa)). The 176-residue stretch at 1331–1506 (RTVFESNENV…WLGCSASATF (176 aa)) folds into the Helicase ATP-binding 2 domain. 1344–1351 (APNGSGKT) contributes to the ATP binding site. Positions 1448 to 1451 (DDLH) match the DEAH box motif. In terms of domain architecture, SEC63 2 spans 1812–2124 (LNLGMIASYY…YLGADQEFDV (313 aa)).

This sequence belongs to the helicase family. SKI2 subfamily.

Its subcellular location is the nucleus. The catalysed reaction is ATP + H2O = ADP + phosphate + H(+). In terms of biological role, catalyzes the ATP-dependent unwinding of U4/U6 RNA duplices, an essential step in the assembly of a catalytically active spliceosome. Plays a role in pre-mRNA splicing. The polypeptide is U5 small nuclear ribonucleoprotein 200 kDa helicase (Caenorhabditis elegans).